Consider the following 272-residue polypeptide: MDDFGTRTACKATETLPMWSHVFSFGLGGIIVPSEAVHEISSATNDLCARWDVPVLHGNKIRGARGSFGFLKKDENKKARFFQELEEILIDDRITAHACVICRPGYRDRYHDKRPEGVRWEMSRTAFDISVERAAKYARSLKRKLSVVYERTGETEDRLIEGYFQRLRTTGTEFSVENSAQHSPMSSADLADTLMSIWPDGKGNPMLQLADLVVHPLGHRPTGLRNRAYDRFAESGQLLDSRTDDPTISIKYSCYDDPYKEYVAPEGNPRNT.

This is an uncharacterized protein from Sinorhizobium fredii (strain NBRC 101917 / NGR234).